A 701-amino-acid polypeptide reads, in one-letter code: Elongation factor G (701 aa).

The 283-residue stretch at 8 to 290 folds into the tr-type G domain; the sequence is SLYRNIGISA…AVVELLPAPT (283 aa). Residues 17 to 24, 88 to 92, and 142 to 145 contribute to the GTP site; these read AHIDAGKT, DTPGH, and NKMD.

Belongs to the TRAFAC class translation factor GTPase superfamily. Classic translation factor GTPase family. EF-G/EF-2 subfamily.

It is found in the cytoplasm. Catalyzes the GTP-dependent ribosomal translocation step during translation elongation. During this step, the ribosome changes from the pre-translocational (PRE) to the post-translocational (POST) state as the newly formed A-site-bound peptidyl-tRNA and P-site-bound deacylated tRNA move to the P and E sites, respectively. Catalyzes the coordinated movement of the two tRNA molecules, the mRNA and conformational changes in the ribosome. The polypeptide is Elongation factor G (Neisseria meningitidis serogroup C (strain 053442)).